We begin with the raw amino-acid sequence, 326 residues long: tRNA uridine(34) hydroxylase (326 aa).

One can recognise a Rhodanese domain in the interval Ser123 to Ser217. Residue Cys177 is the Cysteine persulfide intermediate of the active site. Residues Lys293–Gly326 are disordered.

Belongs to the TrhO family.

The enzyme catalyses uridine(34) in tRNA + AH2 + O2 = 5-hydroxyuridine(34) in tRNA + A + H2O. Functionally, catalyzes oxygen-dependent 5-hydroxyuridine (ho5U) modification at position 34 in tRNAs. The protein is tRNA uridine(34) hydroxylase of Shewanella loihica (strain ATCC BAA-1088 / PV-4).